Here is a 584-residue protein sequence, read N- to C-terminus: MAAKLELLIAQTILQGFDAQYGRFLEVTAGAQQRFERADWPAVQQAMKKRIHLYDHHVGLVVEQLKCITGQQYFDADFPSRVKAVYTDLLPEYPRFEIAESFFNSVYCRLFRHRDLTPEKLFVFSSQPEGRFRDIPRPLSRDFTANGDVSAMLYNLLTDLPLRLPWENLSRDIDYITLALQQSFSAQQLAGATFQIANELFYRNKAAWLVGKLRVADRVYPFLLPIHHSDSGALFIDTCLTSKAEASIVFGFARSYFMVYAPLPAAMVEWLREILPGKTTAELYMAIGCQKHGKTECYREYLTFMSGSQEQFIIAPGVKGMVMLVFTLPSFDRVFKVIKDEFAPQKEVTQAQVMACYQLVKEHDRVGRMADTQEYENFVVDKARLSPELLAELQREVPDKLEDLGDRIAIRHLYMERRMTPLNLYLEQADEQQMRDAIEEYGNAIKQLAAANIFPGDMLFKNFGVTRHGRVVFYDYDEICYMTEVNFRDIPPPRYPEDELASEPWYSVSPNDVFPEEFRHFLCGDRRIRQVFEEMHRDLFEADYWRGLQQRIRDGHVEDVFAYRKKRRFSQRSGAALPATSATA.

ATP is bound by residues 315-321 (APGVKGM) and K336. D371 is an active-site residue.

Belongs to the AceK family.

It localises to the cytoplasm. It catalyses the reaction L-seryl-[isocitrate dehydrogenase] + ATP = O-phospho-L-seryl-[isocitrate dehydrogenase] + ADP + H(+). Bifunctional enzyme which can phosphorylate or dephosphorylate isocitrate dehydrogenase (IDH) on a specific serine residue. This is a regulatory mechanism which enables bacteria to bypass the Krebs cycle via the glyoxylate shunt in response to the source of carbon. When bacteria are grown on glucose, IDH is fully active and unphosphorylated, but when grown on acetate or ethanol, the activity of IDH declines drastically concomitant with its phosphorylation. The sequence is that of Isocitrate dehydrogenase kinase/phosphatase from Serratia proteamaculans (strain 568).